The primary structure comprises 306 residues: UDP-3-O-acyl-N-acetylglucosamine deacetylase (306 aa).

Zn(2+)-binding residues include His-79, His-238, and Asp-242. The Proton donor role is filled by His-265.

This sequence belongs to the LpxC family. Zn(2+) is required as a cofactor.

It carries out the reaction a UDP-3-O-[(3R)-3-hydroxyacyl]-N-acetyl-alpha-D-glucosamine + H2O = a UDP-3-O-[(3R)-3-hydroxyacyl]-alpha-D-glucosamine + acetate. It functions in the pathway glycolipid biosynthesis; lipid IV(A) biosynthesis; lipid IV(A) from (3R)-3-hydroxytetradecanoyl-[acyl-carrier-protein] and UDP-N-acetyl-alpha-D-glucosamine: step 2/6. Its function is as follows. Catalyzes the hydrolysis of UDP-3-O-myristoyl-N-acetylglucosamine to form UDP-3-O-myristoylglucosamine and acetate, the committed step in lipid A biosynthesis. This is UDP-3-O-acyl-N-acetylglucosamine deacetylase from Shewanella frigidimarina (strain NCIMB 400).